The chain runs to 376 residues: Phosphate acyltransferase (376 aa).

The segment at 334–376 (AGSLEQAKRDAGGPGSASQMASPIAGPVSGQPAEPYSAQSSKA) is disordered.

This sequence belongs to the PlsX family. Homodimer. Probably interacts with PlsY.

It localises to the cytoplasm. It carries out the reaction a fatty acyl-[ACP] + phosphate = an acyl phosphate + holo-[ACP]. The protein operates within lipid metabolism; phospholipid metabolism. Functionally, catalyzes the reversible formation of acyl-phosphate (acyl-PO(4)) from acyl-[acyl-carrier-protein] (acyl-ACP). This enzyme utilizes acyl-ACP as fatty acyl donor, but not acyl-CoA. This Paraburkholderia phymatum (strain DSM 17167 / CIP 108236 / LMG 21445 / STM815) (Burkholderia phymatum) protein is Phosphate acyltransferase.